Consider the following 121-residue polypeptide: Small ribosomal subunit protein uS13 (121 aa).

Residues 92–121 (RKGLPCRGQRTRTNARTRKGPRKAAQSLKK) are disordered.

It belongs to the universal ribosomal protein uS13 family. Part of the 30S ribosomal subunit. Forms a loose heterodimer with protein S19. Forms two bridges to the 50S subunit in the 70S ribosome.

Functionally, located at the top of the head of the 30S subunit, it contacts several helices of the 16S rRNA. In the 70S ribosome it contacts the 23S rRNA (bridge B1a) and protein L5 of the 50S subunit (bridge B1b), connecting the 2 subunits; these bridges are implicated in subunit movement. Contacts the tRNAs in the A and P-sites. The protein is Small ribosomal subunit protein uS13 of Janthinobacterium sp. (strain Marseille) (Minibacterium massiliensis).